A 224-amino-acid polypeptide reads, in one-letter code: 7-cyano-7-deazaguanine synthase (224 aa).

Residue 12-22 participates in ATP binding; it reads MSGGMDSTLGA. Cysteine 191, cysteine 199, cysteine 202, and cysteine 205 together coordinate Zn(2+).

It belongs to the QueC family. It depends on Zn(2+) as a cofactor.

It catalyses the reaction 7-carboxy-7-deazaguanine + NH4(+) + ATP = 7-cyano-7-deazaguanine + ADP + phosphate + H2O + H(+). Its pathway is purine metabolism; 7-cyano-7-deazaguanine biosynthesis. Functionally, catalyzes the ATP-dependent conversion of 7-carboxy-7-deazaguanine (CDG) to 7-cyano-7-deazaguanine (preQ(0)). The polypeptide is 7-cyano-7-deazaguanine synthase (Sulfurimonas denitrificans (strain ATCC 33889 / DSM 1251) (Thiomicrospira denitrificans (strain ATCC 33889 / DSM 1251))).